We begin with the raw amino-acid sequence, 1097 residues long: Nitric oxide synthase-like protein (1097 aa).

Cys77 contacts heme b. Residues Gln140, Trp249, Tyr250, Glu254, and Asn259 each contribute to the L-arginine site. Residues Trp340 and Phe353 each contribute to the (6R)-L-erythro-5,6,7,8-tetrahydrobiopterin site. Tyr368 provides a ligand contact to heme b. Residues Lys387 to Phe410 form a calmodulin-binding region. The 196-residue stretch at Ala420–Phe615 folds into the Flavodoxin-like domain. FMN-binding positions include Thr426 to Lys430 and Val561 to His592. The region spanning Lys669 to Pro914 is the FAD-binding FR-type domain. Residues Tyr704 to Cys715 and Leu847 to Ser857 each bind FAD. NADP(+) contacts are provided by residues Ile922–Arg940 and Gly1019–Val1034.

Belongs to the NOS family. Requires heme b as cofactor. FAD is required as a cofactor. The cofactor is FMN.

The enzyme catalyses 2 L-arginine + 3 NADPH + 4 O2 + H(+) = 2 L-citrulline + 2 nitric oxide + 3 NADP(+) + 4 H2O. In terms of biological role, produces nitric oxide (NO) which is a messenger molecule with diverse functions throughout the body. The protein is Nitric oxide synthase-like protein of Bombyx mori (Silk moth).